A 116-amino-acid chain; its full sequence is Large ribosomal subunit protein uL18 (116 aa).

This sequence belongs to the universal ribosomal protein uL18 family. Part of the 50S ribosomal subunit; part of the 5S rRNA/L5/L18/L25 subcomplex. Contacts the 5S and 23S rRNAs.

This is one of the proteins that bind and probably mediate the attachment of the 5S RNA into the large ribosomal subunit, where it forms part of the central protuberance. This is Large ribosomal subunit protein uL18 from Mycoplasma capricolum subsp. capricolum (strain California kid / ATCC 27343 / NCTC 10154).